Here is a 332-residue protein sequence, read N- to C-terminus: MQIKPPYLLFIGDATDKLSIKMAQSLADWRAELCVGELSVNGCTVSTGLNQCSICEAAKLGAKTFVLGFANSGGVLDKKWLPIISEAIENGMNIVSGLHDKLTNFDELVSLSQKHNTNLLDIRHPSTAFATGKGYKRKGKRLLTVGTDCSVGKMYTSLSLEKAMKEQNIDVDFRATGQCGILISGSGVAIDCVIADFISGAAESLSPDAEETHWDIIEGQGSLSHPAFAGVSLGLLHGSQPDALVICHALNRTHMRGLLHTSFPSIETTIELNIAAAKLTNPDVQVVGISVNTSSVSIEQGNEICERLSQTFGVPCVDPLRDGVDSIVANLC.

It belongs to the N-acetyltransferase DgcN family.

The catalysed reaction is D-glutamate + acetyl-CoA = N-acetyl-D-glutamate + CoA + H(+). It carries out the reaction D-aspartate + acetyl-CoA = N-acetyl-D-aspartate + CoA + H(+). It catalyses the reaction D-glutamine + acetyl-CoA = N-acetyl-D-glutamine + CoA + H(+). It participates in amino-acid degradation. Its function is as follows. N-acetyltransferase involved in a deamination-independent D-glutamate degradation pathway, named the DgcN-DgcA pathway. Catalyzes the transfer of the acetyl moiety from acetyl-CoA to D-glutamate to generate N-acetyl-D-glutamate. Can also acetylate D-aspartate and D-glutamine, with lower efficiency. Has low activity with D-asparagine. Cannot use succinyl-CoA. This Pseudoalteromonas sp protein is D-glutamate N-acetyltransferase.